The sequence spans 688 residues: Glycine--tRNA ligase beta subunit (688 aa).

Belongs to the class-II aminoacyl-tRNA synthetase family. Tetramer of two alpha and two beta subunits.

It is found in the cytoplasm. The enzyme catalyses tRNA(Gly) + glycine + ATP = glycyl-tRNA(Gly) + AMP + diphosphate. The sequence is that of Glycine--tRNA ligase beta subunit from Psychromonas ingrahamii (strain DSM 17664 / CCUG 51855 / 37).